Consider the following 292-residue polypeptide: ATP synthase gamma chain (292 aa).

The protein belongs to the ATPase gamma chain family. F-type ATPases have 2 components, CF(1) - the catalytic core - and CF(0) - the membrane proton channel. CF(1) has five subunits: alpha(3), beta(3), gamma(1), delta(1), epsilon(1). CF(0) has three main subunits: a, b and c.

The protein resides in the cell inner membrane. Functionally, produces ATP from ADP in the presence of a proton gradient across the membrane. The gamma chain is believed to be important in regulating ATPase activity and the flow of protons through the CF(0) complex. This chain is ATP synthase gamma chain, found in Maridesulfovibrio salexigens (strain ATCC 14822 / DSM 2638 / NCIMB 8403 / VKM B-1763) (Desulfovibrio salexigens).